A 431-amino-acid chain; its full sequence is Keratin, type I cytoskeletal 20 (431 aa).

The segment at 1–23 (MDFSRQSFHRSLSSSSQGPALSM) is disordered. Positions 1 to 76 (MDFSRQSFHR…SNGSDLFGGN (76 aa)) are head. Residue Ser13 is modified to Phosphoserine; by MAPKAPK2, MAPKAPK3 and PKC. Phosphoserine is present on residues Ser16 and Ser26. The coil 1A stretch occupies residues 77-112 (GKLAMQNLNDRLANYLEKVRSLEQSNSRLEAQIKQW). In terms of domain architecture, IF rod spans 77 to 388 (GKLAMQNLND…RLLEGEDIKT (312 aa)). The segment at 113–130 (YETNAPSTIRDYSSYYAQ) is linker 1. Residues 131 to 222 (IKELQNQVKD…KEHQEEVEVL (92 aa)) are coil 1B. The linker 12 stretch occupies residues 223 to 245 (RRQLGNNVNVEVDAAPGLNLGEI). Residues 246-384 (MNEMRQRYEV…ATYRRLLEGE (139 aa)) form a coil 2 region. Residues 385 to 431 (DIKTTEYQLSTLEMKDIKKTRKIKTVVEEVVDGKVVSSEVKEIEESV) form a tail region.

Belongs to the intermediate filament family. Heterotetramer of two type I and two type II keratins. Associates with KRT8. Post-translationally, hyperphosphorylation at Ser-13 occurs during the early stages of apoptosis but becomes less prominent during the later stages. Phosphorylation at Ser-13 also increases in response to stress brought on by cell injury. Proteolytically cleaved by caspases during apoptosis. Cleavage occurs at Asp-235. As to expression, expressed at low levels in the more differentiated suprabasal regions of the small intestine, and at higher levels in the colon, mainly in the upper region and in scattered cells throughout the remaining epithelium. Also expressed in epithelial cells of bladder, ileum and stomach and at lower levels in pancreas and earskin. The phosphorylated form is nearly exclusively expressed in goblet cells of the small intestine and in the lumen-proximal cells of the colon (at protein level). Also expressed in jejunum and duodenum.

Functionally, plays a significant role in maintaining keratin filament organization in intestinal epithelia. When phosphorylated, plays a role in the secretion of mucin in the small intestine. In Mus musculus (Mouse), this protein is Keratin, type I cytoskeletal 20.